An 85-amino-acid chain; its full sequence is Exodeoxyribonuclease 7 small subunit (85 aa).

Residues Ser-66 to Glu-85 are disordered. A compositionally biased stretch (acidic residues) spans Glu-68–Glu-85.

Belongs to the XseB family. In terms of assembly, heterooligomer composed of large and small subunits.

The protein resides in the cytoplasm. It catalyses the reaction Exonucleolytic cleavage in either 5'- to 3'- or 3'- to 5'-direction to yield nucleoside 5'-phosphates.. In terms of biological role, bidirectionally degrades single-stranded DNA into large acid-insoluble oligonucleotides, which are then degraded further into small acid-soluble oligonucleotides. The protein is Exodeoxyribonuclease 7 small subunit of Thioalkalivibrio sulfidiphilus (strain HL-EbGR7).